The following is a 93-amino-acid chain: Defensin-like protein 210 (93 aa).

A signal peptide spans 1–19 (MKTIILFLTLLVISSSCTS). 3 disulfides stabilise this stretch: Cys63–Cys80, Cys66–Cys85, and Cys70–Cys87.

The protein belongs to the DEFL family.

Its subcellular location is the secreted. The sequence is that of Defensin-like protein 210 from Arabidopsis thaliana (Mouse-ear cress).